The chain runs to 471 residues: 4-aminobutyrate aminotransferase (471 aa).

135 to 136 (GA) is a binding site for pyridoxal 5'-phosphate. R192 serves as a coordination point for substrate. K326 carries the post-translational modification N6-(pyridoxal phosphate)lysine. Pyridoxal 5'-phosphate is bound at residue T351.

Belongs to the class-III pyridoxal-phosphate-dependent aminotransferase family. As to quaternary structure, homodimer and homotetramer. Requires pyridoxal 5'-phosphate as cofactor.

Its subcellular location is the cytoplasm. It carries out the reaction 4-aminobutanoate + 2-oxoglutarate = succinate semialdehyde + L-glutamate. Required for the degradation of gamma-aminobutyric acid (GABA), which is important for utilization of GABA as nitrogen source and for oxidative stress tolerance. Deaminates GABA to succinate semialdehyde, which in turn is converted to succinate by the succinate-semialdehyde dehydrogenase UGA2. Cannot transaminate beta-alanine (BAL). This chain is 4-aminobutyrate aminotransferase (UGA1), found in Saccharomyces cerevisiae (strain ATCC 204508 / S288c) (Baker's yeast).